The chain runs to 66 residues: Cocaine- and amphetamine-regulated transcript protein (66 aa).

Cystine bridges form between Cys34–Cys52 and Cys40–Cys60.

Belongs to the CART family.

The protein localises to the secreted. Functionally, satiety factor closely associated with the actions of leptin and neuropeptide y; this anorectic peptide inhibits both normal and starvation-induced feeding and completely blocks the feeding response induced by neuropeptide Y and regulated by leptin in the hypothalamus. The protein is Cocaine- and amphetamine-regulated transcript protein (CARTPT) of Sus scrofa (Pig).